A 213-amino-acid chain; its full sequence is Small ribosomal subunit protein uS3 (213 aa).

Residues Ile-38–Arg-106 enclose the KH type-2 domain.

It belongs to the universal ribosomal protein uS3 family. Part of the 30S ribosomal subunit. Forms a tight complex with proteins S10 and S14.

In terms of biological role, binds the lower part of the 30S subunit head. Binds mRNA in the 70S ribosome, positioning it for translation. In Maridesulfovibrio salexigens (strain ATCC 14822 / DSM 2638 / NCIMB 8403 / VKM B-1763) (Desulfovibrio salexigens), this protein is Small ribosomal subunit protein uS3.